Here is a 112-residue protein sequence, read N- to C-terminus: UPF0102 protein THEYE_A1950 (112 aa).

Belongs to the UPF0102 family.

This is UPF0102 protein THEYE_A1950 from Thermodesulfovibrio yellowstonii (strain ATCC 51303 / DSM 11347 / YP87).